A 354-amino-acid polypeptide reads, in one-letter code: MTELKNDRYLRALQRQPVDVTPVWMMRQAGRYLPEYKATRAQAGDFMSLCKNAELACEVTLQPLRRYPLDAAILFSDILTIPDAMGLGLYFEAGEGPRFTSPITGKADVEKLPVPDPEQELGYVMNAVRTIRRELKGEVPLIGFSGSPWTLATYMVEGGSSKAFTVIKKMMYAESQTLHLLLDKLAKSVTLYLNAQIRAGAQSVMIFDTWGGVLTGRDYQQFSLYYMHKIVDGLLRENEGRRVPVTLFTKGGGQWLEAIAETGCDALGLDWTTDIADARRRVGHKVALQGNMDPSMLYASPARIEEEVASILAGFGNGEGHVFNLGHGIHQDVPPEHAGAFVEAVHRLSAPYHL.

Substrate is bound by residues 27–31 (RQAGR), aspartate 77, tyrosine 154, threonine 209, and histidine 327.

This sequence belongs to the uroporphyrinogen decarboxylase family. Homodimer.

Its subcellular location is the cytoplasm. It carries out the reaction uroporphyrinogen III + 4 H(+) = coproporphyrinogen III + 4 CO2. Its pathway is porphyrin-containing compound metabolism; protoporphyrin-IX biosynthesis; coproporphyrinogen-III from 5-aminolevulinate: step 4/4. In terms of biological role, catalyzes the decarboxylation of four acetate groups of uroporphyrinogen-III to yield coproporphyrinogen-III. This is Uroporphyrinogen decarboxylase from Cronobacter sakazakii (strain ATCC BAA-894) (Enterobacter sakazakii).